Reading from the N-terminus, the 88-residue chain is Small ribosomal subunit protein uS17 (88 aa).

Belongs to the universal ribosomal protein uS17 family. As to quaternary structure, part of the 30S ribosomal subunit.

One of the primary rRNA binding proteins, it binds specifically to the 5'-end of 16S ribosomal RNA. This Nitratidesulfovibrio vulgaris (strain DSM 19637 / Miyazaki F) (Desulfovibrio vulgaris) protein is Small ribosomal subunit protein uS17.